The chain runs to 376 residues: MASYPCHQHASAFDQAARSRGHSNRRTALRPRRQQEATEVRLEQKMPTLLRVYIDGPHGMGKTTTTQLLVALGSRDDIVYVPEPMTYWQVLGASETIANIYTTQHRLDQGEISAGDAAVVMTSAQITMGMPYAVTDAVLAPHIGGEAGSSHAPPPALTLIFDRHPIAALLCYPAARYLMGSMTPQAVLAFVALIPPTLPGTNIVLGALPEDRHIDRLAKRQRPGERLDLAMLAAIRRVYGLLANTVRYLQGGGSWREDWGQLSGTAVPPQGAEPQSNAGPRPHIGDTLFTLFRAPELLAPNGDLYNVFAWALDVLAKRLRPMHVFILDYDQSPAGCRDALLQLTSGMVQTHVTTPGSIPTICDLARMFAREMGEAN.

The tract at residues 1 to 39 is disordered; that stretch reads MASYPCHQHASAFDQAARSRGHSNRRTALRPRRQQEATE. The span at 19–32 shows a compositional bias: basic residues; sequence SRGHSNRRTALRPR. Residue 56 to 63 coordinates ATP; sequence GPHGMGKT. Residue Glu83 is the Proton acceptor of the active site. Substrate-binding residues include Tyr101 and Gln125. Residue Arg216 participates in ATP binding. Arg222 serves as a coordination point for substrate. Residues 260–280 are disordered; sequence GQLSGTAVPPQGAEPQSNAGP.

This sequence belongs to the herpesviridae thymidine kinase family. Homodimer.

The enzyme catalyses thymidine + ATP = dTMP + ADP + H(+). Catalyzes the transfer of the gamma-phospho group of ATP to thymidine to generate dTMP in the salvage pathway of pyrimidine synthesis. The dTMP serves as a substrate for DNA polymerase during viral DNA replication. Allows the virus to be reactivated and to grow in non-proliferative cells lacking a high concentration of phosphorylated nucleic acid precursors. The protein is Thymidine kinase of Human herpesvirus 1 (strain KOS) (HHV-1).